The chain runs to 417 residues: Serine hydroxymethyltransferase (417 aa).

(6S)-5,6,7,8-tetrahydrofolate contacts are provided by residues Leu121 and 125 to 127 (GHL). Residue Lys229 is modified to N6-(pyridoxal phosphate)lysine. 355 to 357 (SPF) contacts (6S)-5,6,7,8-tetrahydrofolate.

Belongs to the SHMT family. As to quaternary structure, homodimer. The cofactor is pyridoxal 5'-phosphate.

The protein resides in the cytoplasm. The enzyme catalyses (6R)-5,10-methylene-5,6,7,8-tetrahydrofolate + glycine + H2O = (6S)-5,6,7,8-tetrahydrofolate + L-serine. Its pathway is one-carbon metabolism; tetrahydrofolate interconversion. It functions in the pathway amino-acid biosynthesis; glycine biosynthesis; glycine from L-serine: step 1/1. In terms of biological role, catalyzes the reversible interconversion of serine and glycine with tetrahydrofolate (THF) serving as the one-carbon carrier. This reaction serves as the major source of one-carbon groups required for the biosynthesis of purines, thymidylate, methionine, and other important biomolecules. Also exhibits THF-independent aldolase activity toward beta-hydroxyamino acids, producing glycine and aldehydes, via a retro-aldol mechanism. The chain is Serine hydroxymethyltransferase from Shewanella oneidensis (strain ATCC 700550 / JCM 31522 / CIP 106686 / LMG 19005 / NCIMB 14063 / MR-1).